A 258-amino-acid chain; its full sequence is Ribonuclease PH (258 aa).

Phosphate contacts are provided by residues arginine 88 and 126 to 128; that span reads GTR.

It belongs to the RNase PH family. In terms of assembly, homohexameric ring arranged as a trimer of dimers.

The catalysed reaction is tRNA(n+1) + phosphate = tRNA(n) + a ribonucleoside 5'-diphosphate. Its function is as follows. Phosphorolytic 3'-5' exoribonuclease that plays an important role in tRNA 3'-end maturation. Removes nucleotide residues following the 3'-CCA terminus of tRNAs; can also add nucleotides to the ends of RNA molecules by using nucleoside diphosphates as substrates, but this may not be physiologically important. Probably plays a role in initiation of 16S rRNA degradation (leading to ribosome degradation) during starvation. This Mycobacteroides abscessus (strain ATCC 19977 / DSM 44196 / CCUG 20993 / CIP 104536 / JCM 13569 / NCTC 13031 / TMC 1543 / L948) (Mycobacterium abscessus) protein is Ribonuclease PH.